Here is a 222-residue protein sequence, read N- to C-terminus: Charged multivesicular body protein 4a (222 aa).

Disordered stretches follow at residues 1-21 and 180-211; these read MSGL…TPEE and VGDK…DEDE. Positions 1 to 116 are interaction with phosphoinosides; sequence MSGLGRLFGK…ELAAQSMKKA (116 aa). An intramolecular interaction with C-terminus region spans residues 1 to 150; sequence MSGLGRLFGK…QISDAISRPM (150 aa). Coiled-coil stretches lie at residues 20–105 and 155–180; these read EEAI…VLRT and DVDE…LLNV. The interval 151–222 is intramolecular interaction with N-terminus; that stretch reads GFGDDVDEDE…ALKQLAEWVS (72 aa). S196 is subject to Phosphoserine.

This sequence belongs to the SNF7 family. In terms of assembly, probable core component of the endosomal sorting required for transport complex III (ESCRT-III). ESCRT-III components are thought to multimerize to form a flat lattice on the perimeter membrane of the endosome. Several assembly forms of ESCRT-III may exist that interact and act sequentially. Self-associates; overexpression leads to the assembly of filaments that curve and associate to create circular rings. Interacts with CHMP2A. Interacts with CHMP3; the interaction requires the release of CHMP4A autoinhibition. Interacts with CHMP4B. Interacts with CHMP4C. Interacts with CHMP6. Interacts with VPS4A. Interacts with PDCD6IP; the interaction is direct. Widely expressed. Expressed at higher level in heart, kidney, liver and skeletal muscle. Also expressed in brain, placenta, lung and pancreas.

Its subcellular location is the cytoplasmic vesicle membrane. The protein resides in the late endosome membrane. Probable core component of the endosomal sorting required for transport complex III (ESCRT-III) which is involved in multivesicular bodies (MVBs) formation and sorting of endosomal cargo proteins into MVBs. MVBs contain intraluminal vesicles (ILVs) that are generated by invagination and scission from the limiting membrane of the endosome and mostly are delivered to lysosomes enabling degradation of membrane proteins, such as stimulated growth factor receptors, lysosomal enzymes and lipids. The MVB pathway appears to require the sequential function of ESCRT-O, -I,-II and -III complexes. ESCRT-III proteins mostly dissociate from the invaginating membrane before the ILV is released. The ESCRT machinery also functions in topologically equivalent membrane fission events, such as the terminal stages of cytokinesis and the budding of enveloped viruses (HIV-1 and other lentiviruses). ESCRT-III proteins are believed to mediate the necessary vesicle extrusion and/or membrane fission activities, possibly in conjunction with the AAA ATPase VPS4. When overexpressed, membrane-assembled circular arrays of CHMP4A filaments can promote or stabilize negative curvature and outward budding. Via its interaction with PDCD6IP involved in HIV-1 p6- and p9-dependent virus release. CHMP4A/B/C are required for the exosomal release of SDCBP, CD63 and syndecan. The polypeptide is Charged multivesicular body protein 4a (CHMP4A) (Homo sapiens (Human)).